The following is a 305-amino-acid chain: GMP synthase [glutamine-hydrolyzing] subunit B (305 aa).

In terms of domain architecture, GMPS ATP-PPase spans 2–185 (VNVDEFIEEA…LDLEEIISER (184 aa)). 29–35 (SGGVDSS) provides a ligand contact to ATP.

Heterodimer composed of a glutamine amidotransferase subunit (A) and a GMP-binding subunit (B).

The enzyme catalyses XMP + L-glutamine + ATP + H2O = GMP + L-glutamate + AMP + diphosphate + 2 H(+). Its pathway is purine metabolism; GMP biosynthesis; GMP from XMP (L-Gln route): step 1/1. Its function is as follows. Catalyzes the synthesis of GMP from XMP. This is GMP synthase [glutamine-hydrolyzing] subunit B from Haloarcula marismortui (strain ATCC 43049 / DSM 3752 / JCM 8966 / VKM B-1809) (Halobacterium marismortui).